We begin with the raw amino-acid sequence, 311 residues long: MSQPQNTFKLNDDIHHIPMIGLGTYNGAKVGEVGDAVKVALKSGYRHIDGAAIYMNEKEIGHALKEVFAEGEIKREDIFYVSKLWNSCHHASLVRKHCEKTLEDLGLEYLDLYLIHWPIAFENADPSGTTTQPLRDSDGEPVLAAVSIRETWQEMEKLVEYGLVKSIGVSNFNVQNLVDLLTYAKIKPAINQVEVHPYLSQPNLKYFCDRYGIVLTAYSPLGQGKCDLLSNETLKSIADKHNKTVANVIFKWLNQRGIVTIPKSSNPARIIENFNIFDFQLSNEDMDKINSLNSNLRTCTPANFCKIPLFD.

D13–G23 contributes to the NADP(+) binding site. Catalysis depends on Y54, which acts as the Proton donor. H116 provides a ligand contact to substrate. Position 219–273 (S219–N273) interacts with NADP(+).

The protein belongs to the aldo/keto reductase family.

It carries out the reaction an alditol + NAD(+) = an aldose + NADH + H(+). The enzyme catalyses an alditol + NADP(+) = an aldose + NADPH + H(+). Its function is as follows. Catalyzes the NADPH-dependent reduction of a wide variety of carbonyl-containing compounds to their corresponding alcohols with a broad range of catalytic efficiencies. This Dictyostelium discoideum (Social amoeba) protein is Aldose reductase B (alrB).